The chain runs to 835 residues: MIGILKKVFDVNQRQIKRMQKTVEQIDALESSIKPLTDEQLKGKTLEFKERLTKGETVDDLLPEAFAVVREAATRVLGMRPYGVQLMGGIALHEGNISEMKTGEGKTLTSTLPVYLNALTGKGVHVVTVNEYLAQRDANEMGQLHEFLGLTVGINLNSMSREEKQEAYAADITYSTNNELGFDYLRDNMVLYKEQCVQRPLHFAIIDEVDSILVDEARTPLIISGQAQKSTELYMFANAFVRTLENEKDYSFDVKTKNVMLTEDGITKAEKAFHIENLFDLKHVALLHHINQALRAHVVMHRDTDYVVQEGEIVIVDQFTGRLMKGRRYSEGLHQAIEAKEGVEIQNESMTLATITFQNYFRMYEKLSGMTGTAKTEEEEFRNIYNMNVIVIPTNKPIIRDDRADLIFKSMEGKFNAVVEDIVNRHKQGQPVLVGTVAIETSELISKMLTRKGVRHNILNAKNHAREADIIAEAGMKGAVTIATNMAGRGTDIKLGDDIKNIGLAVIGTERHESRRIDNQLRGRAGRQGDPGVTQFYLSMEDELMRRFGSDNMKAMMDRLGMDDSQPIESKMVSRAVESAQKRVEGNNYDARKQLLQYDDVLRQQREVIYKQRQEVMESENLRGIIEGMMKSTVERAVALHTQEEIEEDWNIKGLVDYLNTNLLQEGDVKEEELRRLAPEEMSEPIIAKLIERYNDKEKLMPEEQMREFEKVVVFRVVDTKWTEHIDAMDHLREGIHLRAYGQIDPLREYQMEGFAMFESMIASIEEEISRYIMKAEIEQNLERQEVVQGEAVHPSSDGEEAKKKPVVKGDQVGRNDLCKCGSGKKYKNCCGIGK.

ATP contacts are provided by residues Gln85, 103–107 (GEGKT), and Asp492. A disordered region spans residues 788-807 (VQGEAVHPSSDGEEAKKKPV). Residues Cys819, Cys821, Cys830, and Cys831 each contribute to the Zn(2+) site.

Belongs to the SecA family. Monomer and homodimer. Part of the essential Sec protein translocation apparatus which comprises SecA, SecYEG and auxiliary proteins SecDF. Other proteins may also be involved. The cofactor is Zn(2+).

It is found in the cell membrane. The protein resides in the cytoplasm. It carries out the reaction ATP + H2O + cellular proteinSide 1 = ADP + phosphate + cellular proteinSide 2.. Its function is as follows. Part of the Sec protein translocase complex. Interacts with the SecYEG preprotein conducting channel. Has a central role in coupling the hydrolysis of ATP to the transfer of proteins into and across the cell membrane, serving as an ATP-driven molecular motor driving the stepwise translocation of polypeptide chains across the membrane. This Bacillus thuringiensis subsp. konkukian (strain 97-27) protein is Protein translocase subunit SecA 1.